Reading from the N-terminus, the 489-residue chain is Bypass of stop codon protein 5 (489 aa).

The disordered stretch occupies residues 1-42; it reads MQESKEPQNKFEGCQRISSSSSTLFGGTSFEEPRCGTSQGKE. Low complexity predominate over residues 18 to 30; that stretch reads SSSSSTLFGGTSF. Phosphoserine occurs at positions 111 and 350.

Belongs to the BUL1 family.

Functionally, appears to play a role in translation fidelity, and may act when translation is compromised. May be a component of the ubiquitination pathway. The protein is Bypass of stop codon protein 5 (BSC5) of Saccharomyces cerevisiae (strain ATCC 204508 / S288c) (Baker's yeast).